The primary structure comprises 513 residues: ATP synthase subunit alpha (513 aa).

169 to 176 (GDRQVGKT) is an ATP binding site.

It belongs to the ATPase alpha/beta chains family. F-type ATPases have 2 components, CF(1) - the catalytic core - and CF(0) - the membrane proton channel. CF(1) has five subunits: alpha(3), beta(3), gamma(1), delta(1), epsilon(1). CF(0) has three main subunits: a(1), b(2) and c(9-12). The alpha and beta chains form an alternating ring which encloses part of the gamma chain. CF(1) is attached to CF(0) by a central stalk formed by the gamma and epsilon chains, while a peripheral stalk is formed by the delta and b chains.

It is found in the cell inner membrane. The enzyme catalyses ATP + H2O + 4 H(+)(in) = ADP + phosphate + 5 H(+)(out). Functionally, produces ATP from ADP in the presence of a proton gradient across the membrane. The alpha chain is a regulatory subunit. This Aeromonas salmonicida (strain A449) protein is ATP synthase subunit alpha.